A 112-amino-acid polypeptide reads, in one-letter code: MATPKSSSANRKKGGKKSHRKPKRTWNVYINRSLKSINNHMSMSGRTMKIVNSFVNDLFERIACEAATVVRVNKKRTLGARELQTAVRLVLPADLAKHAMAEGTKAVSHASS.

The tract at residues 1-24 (MATPKSSSANRKKGGKKSHRKPKR) is disordered. The segment covering 10 to 24 (NRKKGGKKSHRKPKR) has biased composition (basic residues).

The protein belongs to the histone H2B family. In terms of assembly, the nucleosome is a histone octamer containing two molecules each of H2A, H2B, H3 and H4 assembled in one H3-H4 heterotetramer and two H2A-H2B heterodimers. The octamer wraps approximately 147 bp of DNA.

Its subcellular location is the nucleus. It is found in the chromosome. Core component of nucleosome. Nucleosomes wrap and compact DNA into chromatin, limiting DNA accessibility to the cellular machineries which require DNA as a template. Histones thereby play a central role in transcription regulation, DNA repair, DNA replication and chromosomal stability. DNA accessibility is regulated via a complex set of post-translational modifications of histones, also called histone code, and nucleosome remodeling. This is Histone H2B from Trypanosoma cruzi.